A 397-amino-acid chain; its full sequence is FAD-dependent monooxygenase trt8 (397 aa).

Tyr53 is a catalytic residue. FAD is bound by residues Asp145 and Ala158.

This sequence belongs to the paxM FAD-dependent monooxygenase family. FAD serves as cofactor.

It functions in the pathway secondary metabolite biosynthesis; terpenoid biosynthesis. FAD-dependent monooxygenase; part of the gene cluster that mediates the biosynthesis of terretonin, a fungal meroterpenoid that acts as a mycotoxin. The first step of the pathway is the synthesis of 3,5-dimethylorsellinic acid (DMOA) by the polyketide synthase trt4. DMOA is then prenylated into farnesyl-DMOA by the polyprenyl transferase trt2. Methylation by the methyltransferase trt5 then leads to farnesyl-DMOA methyl ester which is further subject to epoxidation by the FAD-dependent monooxygenase trt8 to yield epoxyfarnesyl-DMOA methyl ester. Cyclization of epoxyfarnesyl-DMOA methyl ester by the terpene cyclase trt1 leads to a tetracycle intermediate which is in turn converted to preterretonin. Dehydrogenase trt9 comes next to transform preterretonin to preterrenoid. The FAD-dependent monooxygenase trt3 is then required for the C-hydroxylation at C16 of preterrenoid to yield terrenoid. The cytochrome P450 trt6 catalyzes three successive oxidations to transform terrenoid into an unstable intermediate, which then undergoes the D-ring expansion and unusual rearrangement of the methoxy group to afford the core skeleton of terretonin. Trt14 catalyzes the D-ring expansion of terretonin involving intramolecular methoxy rearrangement as well as the hydrolysis of the expanded D-ring and the methyl ester moiety. Finally, the nonheme iron-dependent dioxygenase trt7 accomplishes the last two oxidation reactions steps to complete the biosynthesis of terretonin. Terretonin C is produced via spontaneous decarboxylation of the terretonin precursor. Another shunt product of the terretonin biosynthesis is dihydrofarnesyl-DMOA, derived from epoxyfarnesyl-DMOA through hydrolysis of the epoxide. The chain is FAD-dependent monooxygenase trt8 from Aspergillus terreus (strain NIH 2624 / FGSC A1156).